Here is a 56-residue protein sequence, read N- to C-terminus: Large ribosomal subunit protein bL32c (56 aa).

The protein belongs to the bacterial ribosomal protein bL32 family.

The protein resides in the plastid. It localises to the chloroplast. This is Large ribosomal subunit protein bL32c from Platanus occidentalis (Sycamore).